The sequence spans 217 residues: ATP synthase subunit a (217 aa).

6 helical membrane passes run E5–G25, L63–V83, N89–F109, F120–L140, G157–V177, and L191–V213.

This sequence belongs to the ATPase A chain family. F-type ATPases have 2 components, CF(1) - the catalytic core - and CF(0) - the membrane proton channel. CF(1) has five subunits: alpha(3), beta(3), gamma(1), delta(1), epsilon(1). CF(0) has three main subunits: a(1), b(2) and c(9-12). The alpha and beta chains form an alternating ring which encloses part of the gamma chain. CF(1) is attached to CF(0) by a central stalk formed by the gamma and epsilon chains, while a peripheral stalk is formed by the delta and b chains.

The protein localises to the cell inner membrane. Its function is as follows. Key component of the proton channel; it plays a direct role in the translocation of protons across the membrane. The polypeptide is ATP synthase subunit a (Hydrogenobaculum sp. (strain Y04AAS1)).